Here is a 304-residue protein sequence, read N- to C-terminus: UDP-N-acetylenolpyruvoylglucosamine reductase (304 aa).

In terms of domain architecture, FAD-binding PCMH-type spans 32 to 198; the sequence is RVGGPADILV…LSAELELQEG (167 aa). R177 is an active-site residue. S227 functions as the Proton donor in the catalytic mechanism. Residue E297 is part of the active site.

Belongs to the MurB family. FAD serves as cofactor.

Its subcellular location is the cytoplasm. The enzyme catalyses UDP-N-acetyl-alpha-D-muramate + NADP(+) = UDP-N-acetyl-3-O-(1-carboxyvinyl)-alpha-D-glucosamine + NADPH + H(+). Its pathway is cell wall biogenesis; peptidoglycan biosynthesis. Its function is as follows. Cell wall formation. The protein is UDP-N-acetylenolpyruvoylglucosamine reductase of Clostridioides difficile (strain 630) (Peptoclostridium difficile).